The following is a 444-amino-acid chain: Methylenetetrahydrofolate--tRNA-(uracil-5-)-methyltransferase TrmFO (444 aa).

Glycine 10–glycine 15 lines the FAD pocket.

It belongs to the MnmG family. TrmFO subfamily. The cofactor is FAD.

Its subcellular location is the cytoplasm. The catalysed reaction is uridine(54) in tRNA + (6R)-5,10-methylene-5,6,7,8-tetrahydrofolate + NADH + H(+) = 5-methyluridine(54) in tRNA + (6S)-5,6,7,8-tetrahydrofolate + NAD(+). The enzyme catalyses uridine(54) in tRNA + (6R)-5,10-methylene-5,6,7,8-tetrahydrofolate + NADPH + H(+) = 5-methyluridine(54) in tRNA + (6S)-5,6,7,8-tetrahydrofolate + NADP(+). In terms of biological role, catalyzes the folate-dependent formation of 5-methyl-uridine at position 54 (M-5-U54) in all tRNAs. This is Methylenetetrahydrofolate--tRNA-(uracil-5-)-methyltransferase TrmFO from Streptococcus pneumoniae serotype 4 (strain ATCC BAA-334 / TIGR4).